Reading from the N-terminus, the 164-residue chain is Transcriptional repressor NrdR (164 aa).

The segment at 3–34 (CPFCRHDDTQVVDSRVSEDGAAIRRRRRCPAC) is a zinc-finger region. The 91-residue stretch at 49–139 (PSVVKKDGSR…VYRRFEDVSE (91 aa)) folds into the ATP-cone domain.

It belongs to the NrdR family. Zn(2+) serves as cofactor.

Functionally, negatively regulates transcription of bacterial ribonucleotide reductase nrd genes and operons by binding to NrdR-boxes. The polypeptide is Transcriptional repressor NrdR (Paraburkholderia phymatum (strain DSM 17167 / CIP 108236 / LMG 21445 / STM815) (Burkholderia phymatum)).